Consider the following 427-residue polypeptide: Glutamate-1-semialdehyde 2,1-aminomutase (427 aa).

Lysine 267 is subject to N6-(pyridoxal phosphate)lysine.

It belongs to the class-III pyridoxal-phosphate-dependent aminotransferase family. HemL subfamily. As to quaternary structure, homodimer. Requires pyridoxal 5'-phosphate as cofactor.

Its subcellular location is the cytoplasm. It catalyses the reaction (S)-4-amino-5-oxopentanoate = 5-aminolevulinate. The protein operates within porphyrin-containing compound metabolism; protoporphyrin-IX biosynthesis; 5-aminolevulinate from L-glutamyl-tRNA(Glu): step 2/2. The polypeptide is Glutamate-1-semialdehyde 2,1-aminomutase (Geobacter sulfurreducens (strain ATCC 51573 / DSM 12127 / PCA)).